We begin with the raw amino-acid sequence, 226 residues long: GTP-binding nuclear protein Ran-3 (226 aa).

Positions 14–178 (GYPSFKLILV…LYLARKLTGD (165 aa)) constitute a Small GTPase Ran-type domain. 25-32 (DGGTGKTT) contributes to the GTP binding site. Residues 44-52 (KRYEPTIGV) form a switch-I region. Residues Gly-75, 129–132 (NKVD), and 157–159 (SAK) each bind GTP. The tract at residues 75-91 (GQEKFGGLRDGYYIHGH) is switch-II.

The protein belongs to the small GTPase superfamily. Ran family. As to quaternary structure, found in a nuclear export complex with RanGTP, exportin and pre-miRNA.

The protein localises to the nucleus. Functionally, GTP-binding protein involved in nucleocytoplasmic transport. Required for the import of protein into the nucleus and also for RNA export. Involved in chromatin condensation and control of cell cycle. This chain is GTP-binding nuclear protein Ran-3 (RAN3), found in Oryza sativa subsp. indica (Rice).